We begin with the raw amino-acid sequence, 845 residues long: Protein translocase subunit SecA 1 (845 aa).

Residues glutamine 85, 103 to 107 (GEGKT), and aspartate 492 each bind ATP.

It belongs to the SecA family. As to quaternary structure, monomer and homodimer. Part of the essential Sec protein translocation apparatus which comprises SecA, SecYEG and auxiliary proteins SecDF. Other proteins may also be involved.

The protein resides in the cell membrane. It is found in the cytoplasm. It catalyses the reaction ATP + H2O + cellular proteinSide 1 = ADP + phosphate + cellular proteinSide 2.. In terms of biological role, part of the Sec protein translocase complex. Interacts with the SecYEG preprotein conducting channel. Has a central role in coupling the hydrolysis of ATP to the transfer of proteins into and across the cell membrane, serving as an ATP-driven molecular motor driving the stepwise translocation of polypeptide chains across the membrane. The sequence is that of Protein translocase subunit SecA 1 from Corynebacterium glutamicum (strain ATCC 13032 / DSM 20300 / JCM 1318 / BCRC 11384 / CCUG 27702 / LMG 3730 / NBRC 12168 / NCIMB 10025 / NRRL B-2784 / 534).